The primary structure comprises 1030 residues: Putative pentatricopeptide repeat-containing protein At5g06400, mitochondrial (1030 aa).

The transit peptide at 1 to 77 (MKALFRFKSC…VKLDETTRLR (77 aa)) directs the protein to the mitochondrion. PPR repeat units lie at residues 188–222 (RVGIYNTMLSIAGEARNLDMVDELVSEMEKNGCDK), 223–257 (DIRTWTILISVYGKAKKIGKGLLVFEKMRKSGFEL), 258–292 (DATAYNIMIRSLCIAGRGDLALEFYKEMMEKGITF), 293–323 (GLRTYKMLLDCIAKSEKVDVVQSIADDMVRI), 328–362 (EHDAFGYLLKSFCVSGKIKEALELIRELKNKEMCL), 363–393 (DAKYFEILVKGLCRANRMVDALEIVDIMKRR), 397–431 (DSNVYGIIISGYLRQNDVSKALEQFEVIKKSGRPP), 432–466 (RVSTYTEIMQHLFKLKQFEKGCNLFNEMIENGIEP), 467–501 (DSVAITAVVAGHLGQNRVAEAWKVFSSMEEKGIKP), 502–536 (TWKSYSIFVKELCRSSRYDEIIKIFNQMHASKIVI), 677–711 (NSEAYNMSIKVAGCGKDFKQMRSLFYEMRRQGCLI), 712–746 (TQDTWAIMIMQYGRTGLTNIAIRTFKEMKDMGLIP), 747–783 (SSSTFKCLITVLCEKKGRNVEEATRTFREMIRSGFVP), 784–814 (DRELVQDYLGCLCEVGNTKDAKSCLDSLGKI), 818–852 (VTVAYSIYIRALCRIGKLEEALSELASFEGERSLL), 853–887 (DQYTYGSIVHGLLQRGDLQKALDKVNSMKEIGTKP), 888–922 (GVHVYTSLIVYFFKEKQLEKVLETCQKMEGESCEP), 923–957 (SVVTYTAMICGYMSLGKVEEAWNAFRNMEERGTSP), and 958–992 (DFKTYSKFINCLCQACKSEDALKLLSEMLDKGIAP).

Belongs to the PPR family. P subfamily.

Its subcellular location is the mitochondrion. The sequence is that of Putative pentatricopeptide repeat-containing protein At5g06400, mitochondrial from Arabidopsis thaliana (Mouse-ear cress).